We begin with the raw amino-acid sequence, 596 residues long: Myosin light chain kinase 2, skeletal/cardiac muscle (596 aa).

A disordered region spans residues 1 to 224 (MATENGAVEL…AGQAKMQGDT (224 aa)). Ala-2 is subject to N-acetylalanine. Residues 40-63 (DPKKAPDPPTLKKDAKAPASEKGD) are compositionally biased toward basic and acidic residues. The segment covering 88–104 (EGSAGPPAALPQQTATP) has biased composition (low complexity). Phosphoserine occurs at positions 143, 149, and 151. Residues 189–209 (RPAKAEEGKNILAESQKEVGE) are compositionally biased toward basic and acidic residues. The 256-residue stretch at 285–540 (MNSKEALGGG…AAQCLAHPWL (256 aa)) folds into the Protein kinase domain. ATP-binding positions include 291–299 (LGGGKFGAV) and Lys-314. The Proton acceptor role is filled by Asp-406. Thr-445 is modified (phosphothreonine). The tract at residues 574–586 (IAVSAANRFKKIS) is calmodulin-binding.

The protein belongs to the protein kinase superfamily. CAMK Ser/Thr protein kinase family. May interact with centrin. As to expression, heart and skeletal muscles. Increased expression in the apical tissue compared to the interventricular septal tissue.

Its subcellular location is the cytoplasm. The catalysed reaction is L-seryl-[myosin light chain] + ATP = O-phospho-L-seryl-[myosin light chain] + ADP + H(+). It catalyses the reaction L-threonyl-[myosin light chain] + ATP = O-phospho-L-threonyl-[myosin light chain] + ADP + H(+). Functionally, implicated in the level of global muscle contraction and cardiac function. Phosphorylates a specific serine in the N-terminus of a myosin light chain. The protein is Myosin light chain kinase 2, skeletal/cardiac muscle (MYLK2) of Homo sapiens (Human).